A 26-amino-acid polypeptide reads, in one-letter code: Conotoxin Eb6.17 (26 aa).

2 disulfide bridges follow: C7-C18 and C13-C25.

It belongs to the conotoxin O1 superfamily. In terms of tissue distribution, expressed by the venom duct.

Its subcellular location is the secreted. In Conus ebraeus (Hebrew cone), this protein is Conotoxin Eb6.17 (E1).